A 120-amino-acid chain; its full sequence is Aspartate 1-decarboxylase (120 aa).

S25 (schiff-base intermediate with substrate; via pyruvic acid) is an active-site residue. S25 is subject to Pyruvic acid (Ser). Residue T57 coordinates substrate. Y58 serves as the catalytic Proton donor. 73–75 (GAA) provides a ligand contact to substrate.

Belongs to the PanD family. Heterooctamer of four alpha and four beta subunits. Requires pyruvate as cofactor. In terms of processing, is synthesized initially as an inactive proenzyme, which is activated by self-cleavage at a specific serine bond to produce a beta-subunit with a hydroxyl group at its C-terminus and an alpha-subunit with a pyruvoyl group at its N-terminus.

Its subcellular location is the cytoplasm. It carries out the reaction L-aspartate + H(+) = beta-alanine + CO2. It functions in the pathway cofactor biosynthesis; (R)-pantothenate biosynthesis; beta-alanine from L-aspartate: step 1/1. Functionally, catalyzes the pyruvoyl-dependent decarboxylation of aspartate to produce beta-alanine. The protein is Aspartate 1-decarboxylase of Cupriavidus taiwanensis (strain DSM 17343 / BCRC 17206 / CCUG 44338 / CIP 107171 / LMG 19424 / R1) (Ralstonia taiwanensis (strain LMG 19424)).